We begin with the raw amino-acid sequence, 508 residues long: MDLKKQYIIALDEGTSSCRSIVFDHNLNQIAIAQNEFNTFFPNSGWVEQDPLEIWSAQLATMQSAKNKAQIKSHEVIAVGITNQRETIVLWNKENGLPVYNAIVWQDQRTAALCQKFNEDKLIQTKVKQKTGLPINPYFSATKIAWILKNVPLAKKLMEQKKLLFGTIDSWLIWKLTNGKMHVTDVSNASRTLLFDIVKMEWSKELCDLFEVPVSILPKVLSSNAYFGDIETNHWSSNAKGIVPIRAVLGDQQAALFGQLCTEPGMVKNTYGTGCFVLMNIGDKPTLSKHNLLTTVAWQLENHPPVYALEGSVFVAGAAIKWLRDALKIIYSEKESDFYAELAKENEQNLVFVPAFSGLGAPWWDASARGIILGIEASTKREHIVKASLESIAFQTNDLLNAMASDLGYKITSIKADGGIVKSNYLMQFQADIADVIVSIPKNKETTAVGVCFLAGLACGFWKDIHQLEKLTTLDKKFKSTMDPNIRKTKINSWHKAVERALKWKEID.

Threonine 15 provides a ligand contact to ADP. Residues threonine 15, serine 16, and serine 17 each coordinate ATP. Threonine 15 serves as a coordination point for sn-glycerol 3-phosphate. An ADP-binding site is contributed by arginine 19. The sn-glycerol 3-phosphate site is built by arginine 85, glutamate 86, tyrosine 138, and aspartate 251. Glycerol-binding residues include arginine 85, glutamate 86, tyrosine 138, aspartate 251, and glutamine 252. ADP-binding residues include threonine 273, glycine 317, and glycine 419. The ATP site is built by threonine 273, glycine 317, and glycine 419.

This sequence belongs to the FGGY kinase family.

It carries out the reaction glycerol + ATP = sn-glycerol 3-phosphate + ADP + H(+). The protein operates within polyol metabolism; glycerol degradation via glycerol kinase pathway; sn-glycerol 3-phosphate from glycerol: step 1/1. Its activity is regulated as follows. Inhibited by fructose 1,6-bisphosphate (FBP). Its function is as follows. Key enzyme in the regulation of glycerol uptake and metabolism. Catalyzes the phosphorylation of glycerol to yield sn-glycerol 3-phosphate. This is Glycerol kinase from Mycoplasma genitalium (strain ATCC 33530 / DSM 19775 / NCTC 10195 / G37) (Mycoplasmoides genitalium).